The chain runs to 373 residues: 3-isopropylmalate dehydrogenase AMT6 (373 aa).

77–79 (VGG) lines the NADP(+) pocket. The substrate site is built by arginine 97 and arginine 136. Mg(2+)-binding residues include aspartate 227, aspartate 252, and aspartate 256. Residue 284-289 (SRIRGL) coordinates NADP(+).

The protein belongs to the isocitrate and isopropylmalate dehydrogenases family. In terms of assembly, homodimer. Mg(2+) is required as a cofactor. It depends on Mn(2+) as a cofactor.

The catalysed reaction is (2R,3S)-3-isopropylmalate + NAD(+) = 4-methyl-2-oxopentanoate + CO2 + NADH. The protein operates within amino-acid biosynthesis; L-leucine biosynthesis; L-leucine from 3-methyl-2-oxobutanoate: step 3/4. Its pathway is mycotoxin biosynthesis. Its function is as follows. 3-isopropylmalate dehydrogenase; part of the gene clusters that mediate the biosynthesis of AM-toxins, host-selective toxins (HSTs) causing Alternaria blotch on apple, a worldwide distributed disease. AM-toxins are cyclic depsipeptides containing the 3 residues 2-hydroxy-isovaleric acid (2-HIV), dehydroalanine, L-alanine which are common for all 3 AM-toxins I to III. The fourth precursor is L-alpha-amino-methoxyphenyl-valeric acid (L-Amv) for AM-toxin I, L-alpha-amino-phenyl-valeric acid (L-Apv) for AM-toxin II, and L-alpha-amino-hydroxyphenyl-valeric acid (L-Ahv) for AM-toxin III. AM-toxins have two target sites for affecting susceptible apple cells; they cause invagination of the plasma membrane and electrolyte loss and chloroplast disorganization. The non-ribosomal peptide synthetase AMT1 contains 4 catalytic modules and is responsible for activation of each residue in AM-toxin. The aldo-keto reductase AMT2 catalyzes the conversion of 2-keto-isovaleric acid (2-KIV) to 2-hydroxy-isovaleric acid (2-HIV), one of the precursor residues incorporated by AMT1 during AM-toxin biosynthesis, by reduction of its ketone to an alcohol. The cytochrome P450 monooxygenase AMT3 and the thioesterase AMT4 are also important for AM-toxin production, but their exact function within the AM-toxin biosynthesis are not known yet. Up to 21 proteins (including AMT1 to AMT4) are predicted to be involved in AM-toxin biosynthesis since their expression ishighly up-regulated in AM-toxin-producing cultures. This is 3-isopropylmalate dehydrogenase AMT6 from Alternaria alternata (Alternaria rot fungus).